The following is a 310-amino-acid chain: tRNA dimethylallyltransferase (310 aa).

15-22 (GATASGKT) is an ATP binding site. 17 to 22 (TASGKT) serves as a coordination point for substrate.

The protein belongs to the IPP transferase family. In terms of assembly, monomer. It depends on Mg(2+) as a cofactor.

It carries out the reaction adenosine(37) in tRNA + dimethylallyl diphosphate = N(6)-dimethylallyladenosine(37) in tRNA + diphosphate. Functionally, catalyzes the transfer of a dimethylallyl group onto the adenine at position 37 in tRNAs that read codons beginning with uridine, leading to the formation of N6-(dimethylallyl)adenosine (i(6)A). The sequence is that of tRNA dimethylallyltransferase from Nocardioides sp. (strain ATCC BAA-499 / JS614).